The primary structure comprises 428 residues: Gamma-glutamyl phosphate reductase (428 aa).

Belongs to the gamma-glutamyl phosphate reductase family.

Its subcellular location is the cytoplasm. The enzyme catalyses L-glutamate 5-semialdehyde + phosphate + NADP(+) = L-glutamyl 5-phosphate + NADPH + H(+). It participates in amino-acid biosynthesis; L-proline biosynthesis; L-glutamate 5-semialdehyde from L-glutamate: step 2/2. In terms of biological role, catalyzes the NADPH-dependent reduction of L-glutamate 5-phosphate into L-glutamate 5-semialdehyde and phosphate. The product spontaneously undergoes cyclization to form 1-pyrroline-5-carboxylate. This is Gamma-glutamyl phosphate reductase from Chelativorans sp. (strain BNC1).